A 361-amino-acid chain; its full sequence is Holliday junction branch migration complex subunit RuvB (361 aa).

Residues Met-1–Asp-25 form a disordered region. The large ATPase domain (RuvB-L) stretch occupies residues Thr-5–Tyr-207. ATP contacts are provided by residues Leu-46, Arg-47, Gly-88, Lys-91, Thr-92, Thr-93, Glu-154–Tyr-156, Arg-197, Tyr-207, and Arg-244. Thr-92 serves as a coordination point for Mg(2+). The segment at Thr-208–Asp-278 is small ATPAse domain (RuvB-S). The interval Pro-281–Ser-361 is head domain (RuvB-H). Arg-336 and Arg-341 together coordinate DNA.

This sequence belongs to the RuvB family. In terms of assembly, homohexamer. Forms an RuvA(8)-RuvB(12)-Holliday junction (HJ) complex. HJ DNA is sandwiched between 2 RuvA tetramers; dsDNA enters through RuvA and exits via RuvB. An RuvB hexamer assembles on each DNA strand where it exits the tetramer. Each RuvB hexamer is contacted by two RuvA subunits (via domain III) on 2 adjacent RuvB subunits; this complex drives branch migration. In the full resolvosome a probable DNA-RuvA(4)-RuvB(12)-RuvC(2) complex forms which resolves the HJ.

It is found in the cytoplasm. It catalyses the reaction ATP + H2O = ADP + phosphate + H(+). Its function is as follows. The RuvA-RuvB-RuvC complex processes Holliday junction (HJ) DNA during genetic recombination and DNA repair, while the RuvA-RuvB complex plays an important role in the rescue of blocked DNA replication forks via replication fork reversal (RFR). RuvA specifically binds to HJ cruciform DNA, conferring on it an open structure. The RuvB hexamer acts as an ATP-dependent pump, pulling dsDNA into and through the RuvAB complex. RuvB forms 2 homohexamers on either side of HJ DNA bound by 1 or 2 RuvA tetramers; 4 subunits per hexamer contact DNA at a time. Coordinated motions by a converter formed by DNA-disengaged RuvB subunits stimulates ATP hydrolysis and nucleotide exchange. Immobilization of the converter enables RuvB to convert the ATP-contained energy into a lever motion, pulling 2 nucleotides of DNA out of the RuvA tetramer per ATP hydrolyzed, thus driving DNA branch migration. The RuvB motors rotate together with the DNA substrate, which together with the progressing nucleotide cycle form the mechanistic basis for DNA recombination by continuous HJ branch migration. Branch migration allows RuvC to scan DNA until it finds its consensus sequence, where it cleaves and resolves cruciform DNA. The chain is Holliday junction branch migration complex subunit RuvB from Delftia acidovorans (strain DSM 14801 / SPH-1).